A 327-amino-acid polypeptide reads, in one-letter code: Tetraacyldisaccharide 4'-kinase (327 aa).

An ATP-binding site is contributed by 52 to 59; sequence TLGGAGKT.

This sequence belongs to the LpxK family.

The catalysed reaction is a lipid A disaccharide + ATP = a lipid IVA + ADP + H(+). It functions in the pathway glycolipid biosynthesis; lipid IV(A) biosynthesis; lipid IV(A) from (3R)-3-hydroxytetradecanoyl-[acyl-carrier-protein] and UDP-N-acetyl-alpha-D-glucosamine: step 6/6. Functionally, transfers the gamma-phosphate of ATP to the 4'-position of a tetraacyldisaccharide 1-phosphate intermediate (termed DS-1-P) to form tetraacyldisaccharide 1,4'-bis-phosphate (lipid IVA). This is Tetraacyldisaccharide 4'-kinase from Methylorubrum extorquens (strain CM4 / NCIMB 13688) (Methylobacterium extorquens).